The following is an 81-amino-acid chain: Kappa-theraphotoxin-Gr2c (81 aa).

A signal peptide spans 1-19 (MKAFFVILGLALLCAYSFA). The propeptide occupies 20 to 50 (LEEQDQLSLRNDLLTVMFAENSELTPETEER). 3 cysteine pairs are disulfide-bonded: cysteine 52–cysteine 66, cysteine 59–cysteine 71, and cysteine 65–cysteine 75.

The protein belongs to the neurotoxin 30 (phrixotoxin) family. As to expression, expressed by the venom gland.

It localises to the secreted. Its function is as follows. Inhibits sodium channels Nav1.1/SCN1A (IC(50)=5.7 uM), Nav1.2/SCN2A (IC(50)=12 uM), Nav1.4/SCN4A (IC(50)=4 uM), Nav1.6/SCN8A (IC(50)=6.6 uM), Nav1.7/SCN9A (IC(50)=13.6-1030 nM), potassium channels Kv11.1/KCNH2 (IC(50)=4.7 uM), as well as high-voltage-gated calcium channels Cav1.2/CACNA1C (IC(50)= nM). Also blocks mechanosensitive ion channels (also named stretch-activated channels or SACs) and the hypotonic cell swelling induced calcium increase associated with the activation of such channels. It can thus be useful in treating cardiac ventricular disturbances. Also induces analgesia in mammals. The sequence is that of Kappa-theraphotoxin-Gr2c from Grammostola rosea (Chilean rose tarantula).